We begin with the raw amino-acid sequence, 327 residues long: tRNA pseudouridine synthase B (327 aa).

Asp69 serves as the catalytic Nucleophile. Substrate contacts are provided by Tyr97, Tyr201, and Leu222.

This sequence belongs to the pseudouridine synthase TruB family. Type 1 subfamily.

It catalyses the reaction uridine(55) in tRNA = pseudouridine(55) in tRNA. Its function is as follows. Responsible for synthesis of pseudouridine from uracil-55 in the psi GC loop of transfer RNAs. The polypeptide is tRNA pseudouridine synthase B (Wigglesworthia glossinidia brevipalpis).